We begin with the raw amino-acid sequence, 256 residues long: PHD finger protein ALFIN-LIKE 4 (256 aa).

Residues 149 to 195 (QSKTANGSSKNKSGSKPPKRPNSDSKPQKQVQAKYEEENGGRGNGGD) form a disordered region. A compositionally biased stretch (low complexity) spans 154 to 164 (NGSSKNKSGSK). A PHD-type zinc finger spans residues 200–252 (ETICGACGEAYANGEFWICCDICETWFHGKCVRITPAKAEHIKHYKCPGCSNK).

It belongs to the Alfin family. In terms of assembly, interacts with H3K4me3 and to a lesser extent with H3K4me2.

The protein resides in the nucleus. Histone-binding component that specifically recognizes H3 tails trimethylated on 'Lys-4' (H3K4me3), which mark transcription start sites of virtually all active genes. The sequence is that of PHD finger protein ALFIN-LIKE 4 from Oryza sativa subsp. indica (Rice).